The following is a 577-amino-acid chain: Nuclear receptor subfamily 4 group A member 1 (577 aa).

Residues 243–318 (EGRCAVCGDN…VGMVKEVVRT (76 aa)) constitute a DNA-binding region (nuclear receptor). 2 NR C4-type zinc fingers span residues 246 to 266 (CAVC…CEGC) and 282 to 311 (CLAN…VVGM). Residues 247-333 (AVCGDNASCQ…RRGRLPSKPK (87 aa)) are required for binding NBRE-containing DNA. One can recognise an NR LBD domain in the interval 339-574 (SPVDLINSLV…PIVDKIFMDT (236 aa)). A may bind lipopolysaccharide region spans residues 500–523 (PKKVEELQSQIINCLKEHIPSSMN). Residues 563–574 (PPPIVDKIFMDT) are AF-2.

It belongs to the nuclear hormone receptor family. NR4 subfamily. It depends on Zn(2+) as a cofactor.

The protein resides in the nucleus. It localises to the cytoplasm. The protein localises to the cytosol. Its function is as follows. Orphan nuclear receptor. Binds the NGFI-B response element (NBRE) 5'-AAAAGGTCA-3'. In terms of biological role, in the cytosol, may detect bacterial lipopolysaccharide (LPS) and NBRE-containing mitochondrial DNA released during pyroptosis, and play a role in non-canonical inflammasome activation. The protein is Nuclear receptor subfamily 4 group A member 1 (nr4a1) of Xenopus laevis (African clawed frog).